The sequence spans 317 residues: Transaldolase (317 aa).

The active-site Schiff-base intermediate with substrate is the K132.

Belongs to the transaldolase family. Type 1 subfamily. Homodimer.

The protein resides in the cytoplasm. It catalyses the reaction D-sedoheptulose 7-phosphate + D-glyceraldehyde 3-phosphate = D-erythrose 4-phosphate + beta-D-fructose 6-phosphate. The protein operates within carbohydrate degradation; pentose phosphate pathway; D-glyceraldehyde 3-phosphate and beta-D-fructose 6-phosphate from D-ribose 5-phosphate and D-xylulose 5-phosphate (non-oxidative stage): step 2/3. Functionally, transaldolase is important for the balance of metabolites in the pentose-phosphate pathway. In Yersinia pseudotuberculosis serotype O:1b (strain IP 31758), this protein is Transaldolase.